We begin with the raw amino-acid sequence, 399 residues long: MKPYDLPDARGHFGPYGGVFVAETLMHALDELRAAYDQCRVDPSFIDEFNYELKHFVGRPSPVYHASRWSQRLGGAQIWFKREDLNHTGAHKVNNCIGQALLARRMGKPRVIAETGAGQHGVATATVAARYGMECVVFMGSEDVRRQASNVYRMKLLGATVVPVDSGSRTLKDALNEAMRDWVTNIENTFYIIGTVAGPDPYPRMVRDFQTVIGQECLTQMPEVIGRQPDYVVAAVGGGSNAMGIFHPYIPYENVRLIGVEAAGEGMETGRHAASLAAGQIGVLHGNRTYVMQNADGQVQETHSVSAGLDYPGVGPEHAWLKDSGRAEYAGITDDEALAAFHDCCRIEGIMPALESAHAIAQAVKMAPALSKDKVILVNLSGRGDKDMHTVAERAGLQL.

Lysine 92 is subject to N6-(pyridoxal phosphate)lysine.

Belongs to the TrpB family. In terms of assembly, tetramer of two alpha and two beta chains. It depends on pyridoxal 5'-phosphate as a cofactor.

The enzyme catalyses (1S,2R)-1-C-(indol-3-yl)glycerol 3-phosphate + L-serine = D-glyceraldehyde 3-phosphate + L-tryptophan + H2O. It functions in the pathway amino-acid biosynthesis; L-tryptophan biosynthesis; L-tryptophan from chorismate: step 5/5. Its function is as follows. The beta subunit is responsible for the synthesis of L-tryptophan from indole and L-serine. The sequence is that of Tryptophan synthase beta chain from Bordetella bronchiseptica (strain ATCC BAA-588 / NCTC 13252 / RB50) (Alcaligenes bronchisepticus).